Here is a 113-residue protein sequence, read N- to C-terminus: Hydrogenase maturation factor HypA 2 (113 aa).

H2 provides a ligand contact to Ni(2+). Positions 73, 76, 89, and 92 each coordinate Zn(2+).

This sequence belongs to the HypA/HybF family.

Its function is as follows. Involved in the maturation of [NiFe] hydrogenases. Required for nickel insertion into the metal center of the hydrogenase. The sequence is that of Hydrogenase maturation factor HypA 2 from Bradyrhizobium diazoefficiens (strain JCM 10833 / BCRC 13528 / IAM 13628 / NBRC 14792 / USDA 110).